A 491-amino-acid chain; its full sequence is Cytochrome P450 2F2 (491 aa).

Cys436 lines the heme pocket.

The protein belongs to the cytochrome P450 family. Heme serves as cofactor. In terms of tissue distribution, club cells in lung and liver.

The protein localises to the endoplasmic reticulum membrane. It is found in the microsome membrane. Involved in the regio- and stereoselective transformation of naphthalene to trans-1R-hydroxy-2R-glutathionyl-1,2-dihydronaphthalene in the presence of glutathione and glutathione S-transferases. It specifically catalyzes the production of a very reactive and potentially toxic intermediate, the 2R,2S arene oxide, that is associated with necrosis of the unciliated bronchiolar epithelial cells or club cells in lung. In Mus musculus (Mouse), this protein is Cytochrome P450 2F2 (Cyp2f2).